The sequence spans 204 residues: Venom allergen 5 (204 aa).

4 disulfides stabilise this stretch: Cys-4-Cys-17, Cys-8-Cys-101, Cys-26-Cys-94, and Cys-170-Cys-187. Residues 45-189 enclose the SCP domain; the sequence is LKEHNDFRQK…WHKHYLVCNY (145 aa).

It belongs to the CRISP family. Venom allergen 5-like subfamily. Expressed by the venom gland.

It is found in the secreted. The chain is Venom allergen 5 from Vespula maculifrons (Eastern yellow jacket).